We begin with the raw amino-acid sequence, 61 residues long: Photosystem II reaction center protein K (61 aa).

The propeptide occupies 1-24 (MINIFSFICIYLHSALYSSSFFFG). A helical membrane pass occupies residues 40–60 (MPVIPLFFFLLAFVWQAAVSF).

Belongs to the PsbK family. As to quaternary structure, PSII is composed of 1 copy each of membrane proteins PsbA, PsbB, PsbC, PsbD, PsbE, PsbF, PsbH, PsbI, PsbJ, PsbK, PsbL, PsbM, PsbT, PsbX, PsbY, PsbZ, Psb30/Ycf12, at least 3 peripheral proteins of the oxygen-evolving complex and a large number of cofactors. It forms dimeric complexes.

It localises to the plastid. Its subcellular location is the chloroplast thylakoid membrane. Its function is as follows. One of the components of the core complex of photosystem II (PSII). PSII is a light-driven water:plastoquinone oxidoreductase that uses light energy to abstract electrons from H(2)O, generating O(2) and a proton gradient subsequently used for ATP formation. It consists of a core antenna complex that captures photons, and an electron transfer chain that converts photonic excitation into a charge separation. The polypeptide is Photosystem II reaction center protein K (Pelargonium hortorum (Common geranium)).